Consider the following 86-residue polypeptide: MMDILIIAEYTLLASLAVFSIAAVRIATRRNIRMGLVGISGLNIAIATILILINRMYGIGFCRDIAYALVLLGPVGTIAFARVLRG.

Transmembrane regions (helical) follow at residues 4–24 (ILII…IAAV), 34–54 (MGLV…ILIN), and 64–84 (DIAY…ARVL).

The protein to M.jannaschii MJ1223.

It localises to the cell membrane. This is an uncharacterized protein from Methanothermobacter thermautotrophicus (strain ATCC 29096 / DSM 1053 / JCM 10044 / NBRC 100330 / Delta H) (Methanobacterium thermoautotrophicum).